A 245-amino-acid polypeptide reads, in one-letter code: PF03932 family protein CutC (245 aa).

It belongs to the CutC family.

It localises to the cytoplasm. In Caulobacter vibrioides (strain ATCC 19089 / CIP 103742 / CB 15) (Caulobacter crescentus), this protein is PF03932 family protein CutC.